Reading from the N-terminus, the 553-residue chain is Copine-9 (553 aa).

2 consecutive C2 domains span residues 1-125 (MSLS…ERPL) and 132-255 (KCGT…FTVY). Ca(2+) is bound by residues D163, D169, D225, D227, and D233. Residues 299–500 (NFTVAIDFTA…VQFVPFRDYV (202 aa)) form the VWFA domain. Residues 531–553 (TRDIQPRPPPPVSPNPTPAPEQP) form a disordered region. Pro residues predominate over residues 536–553 (PRPPPPVSPNPTPAPEQP).

Belongs to the copine family. It depends on Ca(2+) as a cofactor.

Probable calcium-dependent phospholipid-binding protein that may play a role in calcium-mediated intracellular processes. Plays a role in dendrite formation by melanocytes. In Mus musculus (Mouse), this protein is Copine-9.